A 186-amino-acid polypeptide reads, in one-letter code: Adenine phosphoribosyltransferase (186 aa).

It belongs to the purine/pyrimidine phosphoribosyltransferase family. Homodimer.

It is found in the cytoplasm. It carries out the reaction AMP + diphosphate = 5-phospho-alpha-D-ribose 1-diphosphate + adenine. It functions in the pathway purine metabolism; AMP biosynthesis via salvage pathway; AMP from adenine: step 1/1. Functionally, catalyzes a salvage reaction resulting in the formation of AMP, that is energically less costly than de novo synthesis. The sequence is that of Adenine phosphoribosyltransferase from Sulfurovum sp. (strain NBC37-1).